The sequence spans 215 residues: N-(5'-phosphoribosyl)anthranilate isomerase (215 aa).

The protein belongs to the TrpF family.

The catalysed reaction is N-(5-phospho-beta-D-ribosyl)anthranilate = 1-(2-carboxyphenylamino)-1-deoxy-D-ribulose 5-phosphate. The protein operates within amino-acid biosynthesis; L-tryptophan biosynthesis; L-tryptophan from chorismate: step 3/5. This Sinorhizobium medicae (strain WSM419) (Ensifer medicae) protein is N-(5'-phosphoribosyl)anthranilate isomerase.